The primary structure comprises 156 residues: ATP synthase subunit b (156 aa).

The helical transmembrane segment at 7-27 threads the bilayer; sequence LIGQTVAFIIFVWFCMKFVWP.

Belongs to the ATPase B chain family. As to quaternary structure, F-type ATPases have 2 components, F(1) - the catalytic core - and F(0) - the membrane proton channel. F(1) has five subunits: alpha(3), beta(3), gamma(1), delta(1), epsilon(1). F(0) has three main subunits: a(1), b(2) and c(10-14). The alpha and beta chains form an alternating ring which encloses part of the gamma chain. F(1) is attached to F(0) by a central stalk formed by the gamma and epsilon chains, while a peripheral stalk is formed by the delta and b chains.

The protein localises to the cell inner membrane. Its function is as follows. F(1)F(0) ATP synthase produces ATP from ADP in the presence of a proton or sodium gradient. F-type ATPases consist of two structural domains, F(1) containing the extramembraneous catalytic core and F(0) containing the membrane proton channel, linked together by a central stalk and a peripheral stalk. During catalysis, ATP synthesis in the catalytic domain of F(1) is coupled via a rotary mechanism of the central stalk subunits to proton translocation. In terms of biological role, component of the F(0) channel, it forms part of the peripheral stalk, linking F(1) to F(0). This is ATP synthase subunit b from Shewanella baltica (strain OS185).